Reading from the N-terminus, the 685-residue chain is UvrABC system protein B (685 aa).

In terms of domain architecture, Helicase ATP-binding spans Asp-30 to Arg-188. ATP is bound at residue Gly-43–Thr-50. The Beta-hairpin motif lies at Tyr-96 to Ile-119. The Helicase C-terminal domain occupies Gln-435–Leu-597. A UVR domain is found at Tyr-641–Gly-676.

The protein belongs to the UvrB family. In terms of assembly, forms a heterotetramer with UvrA during the search for lesions. Interacts with UvrC in an incision complex.

Its subcellular location is the cytoplasm. In terms of biological role, the UvrABC repair system catalyzes the recognition and processing of DNA lesions. A damage recognition complex composed of 2 UvrA and 2 UvrB subunits scans DNA for abnormalities. Upon binding of the UvrA(2)B(2) complex to a putative damaged site, the DNA wraps around one UvrB monomer. DNA wrap is dependent on ATP binding by UvrB and probably causes local melting of the DNA helix, facilitating insertion of UvrB beta-hairpin between the DNA strands. Then UvrB probes one DNA strand for the presence of a lesion. If a lesion is found the UvrA subunits dissociate and the UvrB-DNA preincision complex is formed. This complex is subsequently bound by UvrC and the second UvrB is released. If no lesion is found, the DNA wraps around the other UvrB subunit that will check the other stand for damage. The protein is UvrABC system protein B of Chlorobium phaeobacteroides (strain DSM 266 / SMG 266 / 2430).